Here is a 176-residue protein sequence, read N- to C-terminus: UBA-like domain-containing protein 1 (176 aa).

Residues Ser87 to Arg176 are disordered. The span at Thr120–Gln137 shows a compositional bias: low complexity. The span at Pro138–Pro150 shows a compositional bias: pro residues. A compositionally biased stretch (basic and acidic residues) spans Pro166 to Arg176.

Belongs to the UBALD family.

In Mus musculus (Mouse), this protein is UBA-like domain-containing protein 1 (Ubald1).